Reading from the N-terminus, the 372-residue chain is Queuine tRNA-ribosyltransferase (372 aa).

The active-site Proton acceptor is Asp-92. Residues 92 to 96 (DSGGF), Asp-146, Gln-188, and Gly-215 each bind substrate. Positions 246–252 (GIGTLRE) are RNA binding. Asp-265 serves as the catalytic Nucleophile. The RNA binding; important for wobble base 34 recognition stretch occupies residues 270-274 (TRLGR). Zn(2+)-binding residues include Cys-303, Cys-305, Cys-308, and His-334.

This sequence belongs to the queuine tRNA-ribosyltransferase family. Homodimer. Within each dimer, one monomer is responsible for RNA recognition and catalysis, while the other monomer binds to the replacement base PreQ1. Zn(2+) is required as a cofactor.

The catalysed reaction is 7-aminomethyl-7-carbaguanine + guanosine(34) in tRNA = 7-aminomethyl-7-carbaguanosine(34) in tRNA + guanine. It participates in tRNA modification; tRNA-queuosine biosynthesis. In terms of biological role, catalyzes the base-exchange of a guanine (G) residue with the queuine precursor 7-aminomethyl-7-deazaguanine (PreQ1) at position 34 (anticodon wobble position) in tRNAs with GU(N) anticodons (tRNA-Asp, -Asn, -His and -Tyr). Catalysis occurs through a double-displacement mechanism. The nucleophile active site attacks the C1' of nucleotide 34 to detach the guanine base from the RNA, forming a covalent enzyme-RNA intermediate. The proton acceptor active site deprotonates the incoming PreQ1, allowing a nucleophilic attack on the C1' of the ribose to form the product. After dissociation, two additional enzymatic reactions on the tRNA convert PreQ1 to queuine (Q), resulting in the hypermodified nucleoside queuosine (7-(((4,5-cis-dihydroxy-2-cyclopenten-1-yl)amino)methyl)-7-deazaguanosine). The chain is Queuine tRNA-ribosyltransferase from Synechococcus sp. (strain CC9311).